The chain runs to 401 residues: Chalcone synthase 3 (401 aa).

Cys-168 is a catalytic residue.

It belongs to the thiolase-like superfamily. Chalcone/stilbene synthases family.

The catalysed reaction is (E)-4-coumaroyl-CoA + 3 malonyl-CoA + 3 H(+) = 2',4,4',6'-tetrahydroxychalcone + 3 CO2 + 4 CoA. It participates in secondary metabolite biosynthesis; flavonoid biosynthesis. In terms of biological role, the primary product of this enzyme is 4,2',4',6'-tetrahydroxychalcone (also termed naringenin-chalcone or chalcone) which can under specific conditions spontaneously isomerize into naringenin. The protein is Chalcone synthase 3 (CHS3) of Sorghum bicolor (Sorghum).